A 492-amino-acid polypeptide reads, in one-letter code: Protein nucleotidyltransferase YdiU (492 aa).

8 residues coordinate ATP: glycine 91, glycine 93, arginine 94, lysine 114, aspartate 126, glycine 127, arginine 180, and arginine 187. The active-site Proton acceptor is the aspartate 256. Positions 257 and 266 each coordinate Mg(2+). Residue aspartate 266 participates in ATP binding.

The protein belongs to the SELO family. The cofactor is Mg(2+). Mn(2+) serves as cofactor.

It carries out the reaction L-seryl-[protein] + ATP = 3-O-(5'-adenylyl)-L-seryl-[protein] + diphosphate. The enzyme catalyses L-threonyl-[protein] + ATP = 3-O-(5'-adenylyl)-L-threonyl-[protein] + diphosphate. The catalysed reaction is L-tyrosyl-[protein] + ATP = O-(5'-adenylyl)-L-tyrosyl-[protein] + diphosphate. It catalyses the reaction L-histidyl-[protein] + UTP = N(tele)-(5'-uridylyl)-L-histidyl-[protein] + diphosphate. It carries out the reaction L-seryl-[protein] + UTP = O-(5'-uridylyl)-L-seryl-[protein] + diphosphate. The enzyme catalyses L-tyrosyl-[protein] + UTP = O-(5'-uridylyl)-L-tyrosyl-[protein] + diphosphate. Nucleotidyltransferase involved in the post-translational modification of proteins. It can catalyze the addition of adenosine monophosphate (AMP) or uridine monophosphate (UMP) to a protein, resulting in modifications known as AMPylation and UMPylation. This is Protein nucleotidyltransferase YdiU from Synechococcus sp. (strain ATCC 27144 / PCC 6301 / SAUG 1402/1) (Anacystis nidulans).